A 378-amino-acid chain; its full sequence is Probable cytochrome oxidase subunit 2 (378 aa).

Topologically, residues 1 to 8 are cytoplasmic; it reads MIDYEFLR. Residues 9–28 form a helical membrane-spanning segment; that stretch reads FIWWVLVIVLLIGFSVTDGF. At 29 to 79 the chain is on the periplasmic side; sequence DMGVTALLPVIGKKEVERRIMINTIAPHWDGNQVWLLTAGGAIFAAWPIVY. The chain crosses the membrane as a helical span at residues 80-99; that stretch reads AVSFSGFYIALVLVLAALFL. Topologically, residues 100-122 are cytoplasmic; the sequence is RPLGFEYRAKIDNPTWRSVWDWG. Residues 123-142 traverse the membrane as a helical segment; the sequence is LFAGGFVPALVFGVAFGNLL. Topologically, residues 143 to 164 are periplasmic; the sequence is QGVPFHFNELTQVTYTGSFFEL. A helical membrane pass occupies residues 165–184; sequence LNPFALLCGVISLSMLVTHG. Residues 185-205 are Cytoplasmic-facing; the sequence is ANWLQMKTTEALRDRARTVSQ. A helical transmembrane segment spans residues 206–224; the sequence is IGSIVTLIAFVLAGVWLYS. Residues 225 to 261 are Periplasmic-facing; that stretch reads KDGYVVTSTIDHFAPSSPMNKEVAVETGAWFRNFNEM. A helical transmembrane segment spans residues 262 to 281; sequence PILWIFPALAVVAALLNAAF. Over 282-291 the chain is Cytoplasmic; that stretch reads SKANRCGFAF. Residues 292–311 form a helical membrane-spanning segment; it reads FFSALTMAGVIITAAVSMFP. Residues 312-335 are Periplasmic-facing; sequence FVMPSSSHPEQSLLMWDSTSSELT. The chain crosses the membrane as a helical span at residues 336–355; it reads LTLMLIFAVVFVVIALAYTI. The Cytoplasmic segment spans residues 356-378; the sequence is WSYSKMFGRLDANFIDKNKHSLY.

This sequence belongs to the cytochrome ubiquinol oxidase subunit 2 family. As to quaternary structure, heterodimer of subunits I and II.

The protein resides in the cell inner membrane. In terms of biological role, probable cytochrome oxidase subunit. This Haemophilus influenzae (strain ATCC 51907 / DSM 11121 / KW20 / Rd) protein is Probable cytochrome oxidase subunit 2.